Here is a 1227-residue protein sequence, read N- to C-terminus: Methionine synthase (1227 aa).

Residues 2–325 (SSKVEQLRAQ…EHIAAMSRAV (324 aa)) form the Hcy-binding domain. 3 residues coordinate Zn(2+): Cys-247, Cys-310, and Cys-311. The 262-residue stretch at 356 to 617 (FVNVGERTNV…LPAELRDAVE (262 aa)) folds into the Pterin-binding domain. In terms of domain architecture, B12-binding N-terminal spans 650-744 (QQAEWRSWDV…FIEASKEKGS (95 aa)). Residues Glu-694, 756–760 (GDVHD), His-759, Ser-804, Thr-808, and Ala-860 each bind methylcob(III)alamin. Residues 746–881 (NGKMVIATVK…SDTQRDDFVA (136 aa)) form the B12-binding domain. The 331-residue stretch at 897–1227 (KKPRTPPVTL…LAPNLGYDAD (331 aa)) folds into the AdoMet activation domain. S-adenosyl-L-methionine contacts are provided by residues Asp-946, Arg-1134, and 1189–1190 (YF).

The protein belongs to the vitamin-B12 dependent methionine synthase family. Methylcob(III)alamin is required as a cofactor. The cofactor is Zn(2+).

The enzyme catalyses (6S)-5-methyl-5,6,7,8-tetrahydrofolate + L-homocysteine = (6S)-5,6,7,8-tetrahydrofolate + L-methionine. It participates in amino-acid biosynthesis; L-methionine biosynthesis via de novo pathway; L-methionine from L-homocysteine (MetH route): step 1/1. Its function is as follows. Catalyzes the transfer of a methyl group from methyl-cobalamin to homocysteine, yielding enzyme-bound cob(I)alamin and methionine. Subsequently, remethylates the cofactor using methyltetrahydrofolate. The chain is Methionine synthase (metH) from Salmonella typhimurium (strain LT2 / SGSC1412 / ATCC 700720).